The primary structure comprises 3005 residues: MDPQQRLLLETTYEALENAGIPQANTNGSNTSVHVAMFTRDYDRNVYKDTVGIPKYQVTGTGEAIMSNRISHIFNLHGPSMTIDTGCSGAMTAVSQACMSLRSGDCDIALAGAVNLIMSPDHHISMSNLHMLNAEGKSYAFDSRGAGYGRGEGVATIVMKRLDDAVRCHDPIRAVILDAVINQDGYTAGITLPSSEAQAQLERKALNRVGLKPQEVAYIEAHGTGTAAGDAAELDALSSVFCVDRDLPLYVGSVKSNIGHLEAASGMAALIKATLMLENEAIPPSINFSRPKENLRIDERNIKIPTALQPWPKGASARICVNSFGYGGTNAHAILERAPERPTVMGPKNTPYLFLLSAKSRASLSRTVKNIKEWISSQHDTLSLRDLSYTLNQRRSMMSWRFGGVATTHQELLDVLTQELKSSSAVRTPTRANINFVFTGQGAQWPGMGRELLVVRAFKDSLNQSRNVLHQLGASWDLFDELVRDKESSRLKEPQLSQPVTTAIQIALVETFRSFGISPGAVVGHSSGEIAAAYTAGYLSHDTAIKIAYYRGFSAEIAKAKGMENGAMLATDLGEATAREYVAKLVKGKATVACQNSPNSSTLSGDTTAVSELEEMLSKDSVFNRRLQVDAAYHSHHMEAAAEEYEKSLGDVCVEQPLTKVRFFSSVVGREVWEGFDSTYWTTNLTSTVRYCDALQALCRTQFAQPQGEQSHQLFVEIGPHNALAGPTRQSISDLDKQSTYSYMSALVRGSGGVGTILGVLSELIKHGHHVDLAALRTLDPTCQEANVLHDLPSYAWDHSKRFWNESRLSREYRLRKHPYHDLLGLKMTDHTPLRPSWRYLVGVEGLPWLKDHIVDGTIIFPGSGYLCMVMEAAETSFTKALIIPESPSRVELQLNFCPVGPTNGNAFHFVITAVSAAGIWAEHCKGSVEVKYAAANRPRKALDIPVTFDQISEGLDVESEAIEKISSQELYDELSAVGNTYGPMFRGINKAIIQADRSASFISIPDVTRMMPAQYMRPHFIHPTTLDILLHSSLPLVNRQVGQASIMPVRIDELALSTLIQNESGSSLAAITTLTSADLRGGDADILVFSDSGDATDRPVMSVSGLELRRLAPTGQPATSGTARDICYEMKWDADVEFISAEFLRPQKLPPSVKQKWDVIDRATDIYIQRCLQHLGKRALDASGDHHKLLVKWMNSTVAKTQTCEDPTEAKILEMSSSQGVEGEFLARLGPALPEIITGKVNPLQLMLEDGLLYRVYADDSSKRCYDLMAGYLNSKSFKQSGFAVLEIGAGTGGATLPFLQSLDHNGNRPVVFDFTDISAGLFESAKERLQDWSDVVNFRTLDIEKNPKDQGFTEGFYDIILACNVLHATSSVDSTLSKVRQLLKPEGVLLLLEVTKPRHYHNVTFGTLPGWWKGVNDSRAAGPLLSPEGWSTRMRKASLNMQLAVYDDNETPISSLIVAKPIQEVTKKKQVQIVLDSSVPIWLRKFADQVLSRLAAEEFGVSLTSWDEMTVNPHDSSIWLVIDNGEHPVLSHVTPIQLQSVTEMLKAPSHVLWISVVHDPQFSENPFKHLITGISRTAHAENDRLKMITVDVQQSICQEEGKEEGNRFMSFLMGVVISLSKADLLTIEREYVYKNGQVNIPRVLPSPDIQGWMPGNVTGLPEMKPFHDSQKAWILDIERSEFMKMPVFTENDAFRESLDENEIEIDVEAIGVPELLIRHSINGFAGRVIAIRSKVDGIKVKDNIVAFAASSYPNRLRVHQSQARVVPQGVSSRIAAALLIPLMAVSHALVNIASTNSPIVLIHGATGTIAQSSVAIAKALGSVIIQTVSGDVESPALDDVVSTFADHVVPDQGYSSKHQLQKVLRQRKVDVILSFSKNRVSKEVAGTLKPFGHCIHIENGPKPSLQIEQSQYLSNATISRFRMDAVVRAQPEAVAFAFSTVIDALGSSKMDSKAVNVVSRPVGELDRLFKQEYQHHRNESTVLHVDDCLVRVWSSEKRSLSLDSDATYVVSGGRGDLGKRFIRLMCAAGARHFVTLSRGVSSSHTQLTSLQTELQENVRNDCVLQDIQCNIADLNEVQNALAIIKTQGLPPVRGIIQAAVALEDSTMNSITSDSFNRVLGAKAHGTMNLRNTFAPEGLAFFISLSSAVTVIGTSGQSSYNAENSVQDALAQFSNRDGCHYMSLNVGTIEGADATADNQTRVQALRRQGLISITPDELLGFFRYSVTSEARKGHRCRQAIIGFTPESLSLTTAANGTVHSPMFTHVRERGDRKTSEKRSGAKKTFKATIQETRDFEKISQLMALWIGEKVANLVAADASEVDLGSSIADFYVDSLIIIELRNWINRELQASIFIPETMESQNLLSLGAKVASRSALVPSSISSKVSNSNDEALSIDSTASLSLAPSSQPPEMLETPYAQLQHLPAADLHTALDMLIESRKGFCTQAELEETLRASAEWRGVEKADRDAIVSKFTGSNLRLESYEKALHLERREPLQDHAVFYLGHITDQVPDHTQAERAAIIVHSTLSFKHQLEMGVLEQNSLNGSPLCMSTLQWLFHATQEPRHELDVMKKYRASGNVAIMRRGHIFVATVHDDDGLAALVALFEDVIQHSEDAIPALSILTSHRRDDWAQLKGSLESITGNAAKLEAIQSAAFVICLDEGAPTNPGERATSQLLNDRHLSNRWLDKTLQFSVAANGVSSLIGLNSTLDGLSVKQLHEAITEQILASTRGHMDILHQDHERRPAKRLSVFRELGFEIPPPITTAIEEKRLRNLAHYPSVAAFSQHYADLNRTFLGTRRLRSKGTVLMAIVFAIRLFYGRFEPVWETVTLAKYARGRTDWLQIVTPDVMEWIESAIQRNSGGKSTICGRDMLVQLQASTTKHTQNVRQVADSRGFVEPLYAFQAFIESEGRKLPRLFKSEAWKHSDRNATPKLVKTDCLGSGGWLRMQEAGFLMPHPNSLFIHYEVHHTDPLVLVQGRDRDVAKFSGCLNEAVKAMRTIIEQSS.

One can recognise a Ketosynthase family 3 (KS3) domain in the interval 1–337 (MDPQQRLLLE…GTNAHAILER (337 aa)). Residues cysteine 87, histidine 222, and histidine 260 each act as for beta-ketoacyl synthase activity in the active site. The tract at residues 437 to 751 (VFTGQGAQWP…SYMSALVRGS (315 aa)) is malonyl-CoA:ACP transacylase (MAT) domain. The interval 821 to 936 (HDLLGLKMTD…GSVEVKYAAA (116 aa)) is N-terminal hotdog fold. The interval 821 to 1114 (HDLLGLKMTD…SGLELRRLAP (294 aa)) is dehydratase (DH) domain. Residues 821–1118 (HDLLGLKMTD…LRRLAPTGQP (298 aa)) form the PKS/mFAS DH domain. Catalysis depends on histidine 853, which acts as the Proton acceptor; for dehydratase activity. The C-terminal hotdog fold stretch occupies residues 963–1118 (IEKISSQELY…LRRLAPTGQP (156 aa)). The active-site Proton donor; for dehydratase activity is the aspartate 1028. The tract at residues 1259 to 1445 (ADDSSKRCYD…MRKASLNMQL (187 aa)) is methyltransferase (CMet) domain. Residues 1683-1985 (EFMKMPVFTE…QHHRNESTVL (303 aa)) are enoyl reductase (ER) (ER) domain. The segment at 2008–2191 (ATYVVSGGRG…YMSLNVGTIE (184 aa)) is ketoreductase (KR) domain. The Carrier domain maps to 2293-2375 (TRDFEKISQL…SLGAKVASRS (83 aa)). Serine 2335 carries the post-translational modification O-(pantetheine 4'-phosphoryl)serine.

Its pathway is mycotoxin biosynthesis. In terms of biological role, highly reducing polyketide synthase; part of the gene clusters that mediate the biosynthesis of the host-selective toxins (HSTs) AF-toxins responsible for Alternaria black spot of strawberry disease by the strawberry pathotype. AF-toxin I and III are valine derivatives of 2,3-dyhydroxy-isovaleric acid and 2-hydroxy-isovaleric acid respectively, while AF II is an isoleucine derivative of 2-hydroxy-valeric acid. These derivatives are bound to a 9,10-epoxy-8-hydroxy-9-methyl-decatrienoic acid (EDA) moiety. On cellular level, AF-toxins affect plasma membrane of susceptible cells and cause a sudden increase in loss of K(+) after a few minutes of toxin treatment. The aldo-keto reductase AFTS1 catalyzes the conversion of 2-keto-isovaleric acid (2-KIV) to 2-hydroxy-isovaleric acid (2-HIV) by reduction of its ketone to an alcohol. The acyl-CoA ligase AFT1, the hydrolase AFT2 and the enoyl-CoA hydratases AFT3 and AFT6, but also the polyketide synthase AFT9, the acyl-CoA dehydrogenase AFT10, the cytochrome P450 monooxygenase AFT11 and the oxidoreductase AFT12 are all involved in the biosynthesis of the AK-, AF- and ACT-toxin common EDA structural moiety. The exact function of each enzyme, and of additional enzymes identified within the AF-toxin clusters have still to be determined. This is Highly reducing polyketide synthase AFT9-1 from Alternaria alternata (Alternaria rot fungus).